Reading from the N-terminus, the 372-residue chain is NAD(P)H-quinone oxidoreductase subunit 1 (372 aa).

9 helical membrane-spanning segments follow: residues 27 to 47 (AIWM…GVLV), 65 to 85 (PEYI…KLVF), 97 to 117 (WLFT…YLIV), 128 to 148 (VGTG…GLLM), 166 to 186 (AAQS…IVMM), 204 to 224 (ILGW…IAAL), 266 to 286 (ILSA…PIPI), 308 to 328 (ALGI…AILL), and 347 to 367 (FLLP…LAFP).

The protein belongs to the complex I subunit 1 family. In terms of assembly, NDH-1 is composed of at least 11 different subunits.

It localises to the cellular thylakoid membrane. It carries out the reaction a plastoquinone + NADH + (n+1) H(+)(in) = a plastoquinol + NAD(+) + n H(+)(out). The catalysed reaction is a plastoquinone + NADPH + (n+1) H(+)(in) = a plastoquinol + NADP(+) + n H(+)(out). NDH-1 shuttles electrons from an unknown electron donor, via FMN and iron-sulfur (Fe-S) centers, to quinones in the respiratory and/or the photosynthetic chain. The immediate electron acceptor for the enzyme in this species is believed to be plastoquinone. Couples the redox reaction to proton translocation, and thus conserves the redox energy in a proton gradient. The chain is NAD(P)H-quinone oxidoreductase subunit 1 from Nostoc sp. (strain PCC 7120 / SAG 25.82 / UTEX 2576).